Reading from the N-terminus, the 237-residue chain is UPF0173 metal-dependent hydrolase BruAb2_0628 (237 aa).

It belongs to the UPF0173 family.

The chain is UPF0173 metal-dependent hydrolase BruAb2_0628 from Brucella abortus biovar 1 (strain 9-941).